The following is a 148-amino-acid chain: Single-stranded DNA-binding protein 2 (148 aa).

The SSB domain occupies 6–108 (MNHITVSGLV…IEAESFGHDL (103 aa)).

Homotetramer.

The polypeptide is Single-stranded DNA-binding protein 2 (ssb2) (Tropheryma whipplei (strain TW08/27) (Whipple's bacillus)).